Consider the following 425-residue polypeptide: Rho GTPase-activating protein 8 (425 aa).

The CRAL-TRIO domain occupies proline 13–glutamine 168. A disordered region spans residues asparagine 169–glutamine 192. A compositionally biased stretch (pro residues) spans glutamine 174 to proline 189. The 187-residue stretch at valine 195–phenylalanine 381 folds into the Rho-GAP domain.

Highly expressed in skeletal muscle, lung and testis, and at lower levels in kidney, stomach and colon. Not detected in heart, liver, spleen, breast, brain, neonatal head or pancreas.

Functionally, GTPase activator for the Rho-type GTPases by converting them to an inactive GDP-bound state. The polypeptide is Rho GTPase-activating protein 8 (Arhgap8) (Mus musculus (Mouse)).